The chain runs to 61 residues: Type IV secretion system protein PtlI homolog (61 aa).

A signal peptide spans 1-25 (MIHAHSNARLLRWAILAIAPATLGA). The tract at residues 29–61 (NGPPGLPYPDGKPLIPINTAAPEQGSSCQTRAP) is disordered. Positions 52 to 61 (QGSSCQTRAP) are enriched in polar residues.

The polypeptide is Type IV secretion system protein PtlI homolog (ptlI) (Bordetella bronchiseptica (strain ATCC BAA-588 / NCTC 13252 / RB50) (Alcaligenes bronchisepticus)).